A 628-amino-acid chain; its full sequence is Chaperone protein HtpG (628 aa).

The a; substrate-binding stretch occupies residues 1–340 (MSTETLQKET…SADLPLNVSR (340 aa)). The interval 341–557 (EILQHSKDIE…EHDLSGNLER (217 aa)) is b. A c region spans residues 558 to 628 (LLKAAGQKTP…FVRRVNAMLA (71 aa)).

This sequence belongs to the heat shock protein 90 family. In terms of assembly, homodimer.

Its subcellular location is the cytoplasm. Molecular chaperone. Has ATPase activity. The polypeptide is Chaperone protein HtpG (Methylobacillus flagellatus (strain ATCC 51484 / DSM 6875 / VKM B-1610 / KT)).